Consider the following 208-residue polypeptide: Putative ADP-ribose pyrophosphatase YjhB (208 aa).

The region spanning 69–195 is the Nudix hydrolase domain; that stretch reads TPKADVRGAV…NTPSQLSMLF (127 aa). The Nudix box motif lies at 100–121; sequence GFCEIGLSPAENVVKEIKEESG. Mg(2+) is bound by residues glutamate 115 and glutamate 119.

This sequence belongs to the Nudix hydrolase family. Mg(2+) serves as cofactor. Mn(2+) is required as a cofactor.

In terms of biological role, probably mediates the hydrolysis of some nucleoside diphosphate derivatives. This is Putative ADP-ribose pyrophosphatase YjhB (yjhB) from Bacillus subtilis (strain 168).